We begin with the raw amino-acid sequence, 30 residues long: Dermaseptin-3.1TR (30 aa).

In terms of tissue distribution, expressed by the skin glands.

The protein resides in the secreted. In terms of biological role, has antimicrobial activity. The protein is Dermaseptin-3.1TR of Phyllomedusa trinitatis (Trinidad leaf frog).